Reading from the N-terminus, the 335-residue chain is Deoxyhypusine hydroxylase (335 aa).

HEAT-like PBS-type repeat units follow at residues 74 to 100 (LKHELAYCLGQTRNLDTVPHLRKVLED), 107 to 133 (CRHEAAEALGALGDAGSLAILQRLRDD), 203 to 233 (KRYRAMFALRDMCSPPDLPTAVPAIEALAEG), 241 to 267 (FRHEIAFVFGQLSHPASIPSLVATLSD), and 274 to 301 (VRHEAAEALGSLGAEDGVEETLKRFVND). His-76, Glu-77, His-109, and Glu-110 together coordinate Fe cation. Fe cation is bound by residues His-243, Glu-244, His-276, and Glu-277.

The protein belongs to the deoxyhypusine hydroxylase family. It depends on Fe(2+) as a cofactor.

It localises to the cytoplasm. The protein resides in the nucleus. It carries out the reaction [eIF5A protein]-deoxyhypusine + AH2 + O2 = [eIF5A protein]-hypusine + A + H2O. The protein operates within protein modification; eIF5A hypusination. Catalyzes the hydroxylation of the N(6)-(4-aminobutyl)-L-lysine intermediate to form hypusine, an essential post-translational modification only found in mature eIF-5A factor. This Coccidioides immitis (strain RS) (Valley fever fungus) protein is Deoxyhypusine hydroxylase.